A 181-amino-acid chain; its full sequence is NADH-quinone oxidoreductase subunit I (181 aa).

4Fe-4S ferredoxin-type domains are found at residues L44 to A74 and R90 to D119. [4Fe-4S] cluster-binding residues include C54, C57, C60, C64, C99, C102, C105, and C109.

This sequence belongs to the complex I 23 kDa subunit family. As to quaternary structure, NDH-1 is composed of 14 different subunits. Subunits NuoA, H, J, K, L, M, N constitute the membrane sector of the complex. The cofactor is [4Fe-4S] cluster.

It is found in the cell membrane. It catalyses the reaction a quinone + NADH + 5 H(+)(in) = a quinol + NAD(+) + 4 H(+)(out). In terms of biological role, NDH-1 shuttles electrons from NADH, via FMN and iron-sulfur (Fe-S) centers, to quinones in the respiratory chain. The immediate electron acceptor for the enzyme in this species is believed to be menaquinone. Couples the redox reaction to proton translocation (for every two electrons transferred, four hydrogen ions are translocated across the cytoplasmic membrane), and thus conserves the redox energy in a proton gradient. This chain is NADH-quinone oxidoreductase subunit I, found in Mycobacterium marinum (strain ATCC BAA-535 / M).